Consider the following 64-residue polypeptide: Protein YnhH (64 aa).

The protein is Protein YnhH of Escherichia coli (strain K12).